Reading from the N-terminus, the 101-residue chain is Apolipoprotein C-II (101 aa).

Positions 1 to 22 (MGTRCLLVLLLVLLVLKCEVQG) are cleaved as a signal peptide. Residues 23–28 (DDMARQ) constitute a propeptide, removed in mature form. A lipid binding region spans residues 66 to 74 (AMDEKIRDM). Positions 78–101 (STAAVRIYTGILTDQILSMLTGDP) are lipoprotein lipase cofactor.

This sequence belongs to the apolipoprotein C2 family. Proapolipoprotein C-II is synthesized as a sialic acid containing glycoprotein which is subsequently desialylated prior to its proteolytic processing. In terms of processing, proapolipoprotein C-II, the major form found in plasma undergoes proteolytic cleavage of its N-terminal hexapeptide to generate the mature form apolipoprotein C-II, which occurs as the minor form in plasma.

It localises to the secreted. In terms of biological role, component of chylomicrons, very low-density lipoproteins (VLDL), low-density lipoproteins (LDL), and high-density lipoproteins (HDL) in plasma. Plays an important role in lipoprotein metabolism as an activator of lipoprotein lipase, the enzyme which hydrolyzes the triacylglycerols on chylomicrons and VLDL. The sequence is that of Apolipoprotein C-II (APOC2) from Panthera tigris altaica (Siberian tiger).